We begin with the raw amino-acid sequence, 559 residues long: N-acetylglucosamine-6-sulfatase (559 aa).

A disordered region spans residues 1-26; the sequence is MRFLSLAPDRPRRGGPRHLPSGSPAP. The signal sequence occupies residues 1–47; it reads MRFLSLAPDRPRRGGPRHLPSGSPAPPPPPPLLLLLLLGGCLGVSGA. Ca(2+)-binding residues include Asp-62, Asp-63, and Cys-98. Residue Cys-98 is the Nucleophile of the active site. A 3-oxoalanine (Cys) modification is found at Cys-98. Residues Asn-118, Asn-124, Asn-190, Asn-205, Asn-217, Asn-286, and Asn-324 are each glycosylated (N-linked (GlcNAc...) asparagine). Positions 333 and 334 each coordinate Ca(2+). N-linked (GlcNAc...) asparagine glycosylation is found at Asn-369, Asn-394, Asn-412, Asn-429, Asn-456, and Asn-487. Ser-548 is subject to Phosphoserine.

This sequence belongs to the sulfatase family. Requires Ca(2+) as cofactor. In terms of processing, processed by internal peptidase. The conversion to 3-oxoalanine (also known as C-formylglycine, FGly), of a serine or cysteine residue in prokaryotes and of a cysteine residue in eukaryotes, is critical for catalytic activity.

Its subcellular location is the lysosome. The catalysed reaction is Hydrolysis of the 6-sulfate groups of the N-acetyl-D-glucosamine 6-sulfate units of heparan sulfate and keratan sulfate.. Hydrolyzes 6-sulfate groups in N-acetyl-d-glucosaminide units of heparin sulfate and keratan sulfate. The polypeptide is N-acetylglucosamine-6-sulfatase (GNS) (Capra hircus (Goat)).